Consider the following 434-residue polypeptide: Polyadenylate-binding protein RBP47C' (434 aa).

The interval Met-1–Pro-50 is disordered. RRM domains lie at Lys-103–Phe-185, Leu-199–Pro-278, and Thr-306–Asn-378.

It belongs to the polyadenylate-binding RBP47 family. Interacts with the poly(A) tail of mRNA in nucleus.

It localises to the nucleus. The protein resides in the cytoplasmic granule. In terms of biological role, heterogeneous nuclear ribonucleoprotein (hnRNP)-protein binding the poly(A) tail of mRNA and probably involved in some steps of pre-mRNA maturation. This chain is Polyadenylate-binding protein RBP47C' (RBP47C'), found in Arabidopsis thaliana (Mouse-ear cress).